A 375-amino-acid polypeptide reads, in one-letter code: Response regulator aspartate phosphatase E (375 aa).

A coiled-coil region spans residues 24-95 (NVTDAEMLKA…HKKKLDNMRA (72 aa)). 6 TPR repeats span residues 96–129 (YYYNFFRGMYEFRNGEYTRAITYYKKAERKIPTI), 177–210 (IQCHFVIAGNYDDLENHEKALPHLQEALKGAELL), 219–252 (ATAFFNLGNCYHKMDNLNKAARYIEQALVQYRKI), 258–291 (PQAYHDLALIYFKQGKKEQAMDCFRKGIRSAVDF), 297–330 (MNLFEALDVLYIRNGDTPKLLNIFSRLENGKGYP), and 333–366 (EELALLGGNLFDYNGKIEDSIICFKKMVYAQKQI).

The protein belongs to the Rap family.

The protein localises to the cytoplasm. With respect to regulation, phosphatase activity is inhibited by the phosphatase regulator PhrE. In terms of biological role, involved in the regulation of sporulation. Acts as a phosphatase that specifically dephosphorylates the sporulation initiation phosphotransferase Spo0F and inhibits its activity. Probably plays a dispensable role in the overall context of sporulation initiation. This Bacillus subtilis (strain 168) protein is Response regulator aspartate phosphatase E (rapE).